The sequence spans 88 residues: Cell division topological specificity factor (88 aa).

This sequence belongs to the MinE family.

In terms of biological role, prevents the cell division inhibition by proteins MinC and MinD at internal division sites while permitting inhibition at polar sites. This ensures cell division at the proper site by restricting the formation of a division septum at the midpoint of the long axis of the cell. The sequence is that of Cell division topological specificity factor from Shewanella denitrificans (strain OS217 / ATCC BAA-1090 / DSM 15013).